The following is a 334-amino-acid chain: Delta(1)-pyrroline-2-carboxylate/Delta(1)-piperideine-2-carboxylate reductase (334 aa).

The active-site Charge relay system is serine 44. Residue histidine 45 is the Proton donor of the active site. A substrate-binding site is contributed by arginine 49. 117–121 (HFSAL) contacts NADP(+). Threonine 157 serves as a coordination point for substrate. 175–177 (DFA) serves as a coordination point for NADP(+). 183-184 (RG) serves as a coordination point for substrate. The active-site Charge relay system is the glutamate 185. NADP(+)-binding positions include 226–227 (HK) and 301–307 (RLPSQRR).

It belongs to the LDH2/MDH2 oxidoreductase family. As to quaternary structure, homodimer.

It carries out the reaction L-pipecolate + NADP(+) = Delta(1)-piperideine-2-carboxylate + NADPH + H(+). The enzyme catalyses L-proline + NADP(+) = 1-pyrroline-2-carboxylate + NADPH + H(+). It catalyses the reaction cis-4-hydroxy-L-proline + NADP(+) = Delta(1)-pyrroline-(4S)-hydroxy-2-carboxylate + NADPH + 2 H(+). In terms of biological role, catalyzes the reduction of both Delta(1)-pyrroline-2-carboxylate (Pyr2C) and Delta(1)-piperideine-2-carboxylate (Pip2C) to L-proline and L-pipecolate, respectively, using NADPH as the electron donor. Cannot use NADH instead of NADPH. Is likely involved in a degradation pathway that converts trans-3-hydroxy-L-proline (t3LHyp) to L-proline, which would allow P.aeruginosa to grow on t3LHyp as a sole carbon source. Can also catalyze the reverse oxidation reactions, albeit at a much lower rate. Is also able to use Delta(1)-pyrroline-(4S)-hydroxy-2-carboxylate (Pyr4SH2C) and cis-4-hydroxy-L-proline (c4LHyp) as substrates, and might be involved in the metabolism of c4LHyp, a compound which is generated by the hydroxylation of free L-proline in bacteria. The chain is Delta(1)-pyrroline-2-carboxylate/Delta(1)-piperideine-2-carboxylate reductase from Pseudomonas aeruginosa (strain ATCC 15692 / DSM 22644 / CIP 104116 / JCM 14847 / LMG 12228 / 1C / PRS 101 / PAO1).